Here is a 365-residue protein sequence, read N- to C-terminus: Heme A synthase (365 aa).

5 helical membrane passes run 23–43, 109–129, 137–157, 172–192, and 208–228; these read LLRI…LVGG, LLAR…WLTG, LPLV…WWMV, LATH…ILRG, and GFAA…ALVA. His-272 contacts heme. The next 3 helical transmembrane spans lie at 274–294, 303–323, and 327–347; these read LGAY…ARAL, AVLF…TLLM, and IHVA…SVAH. His-333 provides a ligand contact to heme.

This sequence belongs to the COX15/CtaA family. Type 2 subfamily. In terms of assembly, interacts with CtaB. It depends on heme b as a cofactor.

The protein resides in the cell membrane. The enzyme catalyses Fe(II)-heme o + 2 A + H2O = Fe(II)-heme a + 2 AH2. The protein operates within porphyrin-containing compound metabolism; heme A biosynthesis; heme A from heme O: step 1/1. Its function is as follows. Catalyzes the conversion of heme O to heme A by two successive hydroxylations of the methyl group at C8. The first hydroxylation forms heme I, the second hydroxylation results in an unstable dihydroxymethyl group, which spontaneously dehydrates, resulting in the formyl group of heme A. This Agrobacterium fabrum (strain C58 / ATCC 33970) (Agrobacterium tumefaciens (strain C58)) protein is Heme A synthase.